Here is a 102-residue protein sequence, read N- to C-terminus: MTGAELTGFMILAAGLFAAGVFGVLARRGILFQLIALEVALSGPALAFIAAGAYHGDAEGQGMFVLTLTLAAAEVAVGLALFLRIRRAKGSDDSDAVSGLKG.

3 consecutive transmembrane segments (helical) span residues 6–26 (LTGFMILAAGLFAAGVFGVLA), 30–50 (ILFQLIALEVALSGPALAFIA), and 63–83 (MFVLTLTLAAAEVAVGLALFL).

It belongs to the complex I subunit 4L family. In terms of assembly, NDH-1 is composed of 14 different subunits. Subunits NuoA, H, J, K, L, M, N constitute the membrane sector of the complex.

Its subcellular location is the cell inner membrane. The enzyme catalyses a quinone + NADH + 5 H(+)(in) = a quinol + NAD(+) + 4 H(+)(out). Functionally, NDH-1 shuttles electrons from NADH, via FMN and iron-sulfur (Fe-S) centers, to quinones in the respiratory chain. The immediate electron acceptor for the enzyme in this species is believed to be ubiquinone. Couples the redox reaction to proton translocation (for every two electrons transferred, four hydrogen ions are translocated across the cytoplasmic membrane), and thus conserves the redox energy in a proton gradient. The sequence is that of NADH-quinone oxidoreductase subunit K from Rhodopseudomonas palustris (strain BisA53).